The following is a 429-amino-acid chain: 26S proteasome regulatory subunit 6A homolog (429 aa).

Positions 1-21 (MSSPPPAAAAAMAVDDADDDQ) are disordered. 217 to 224 (GPPGTGKT) is an ATP binding site.

This sequence belongs to the AAA ATPase family.

It is found in the cytoplasm. The protein resides in the nucleus. Its function is as follows. The 26S proteasome is involved in the ATP-dependent degradation of ubiquitinated proteins. The regulatory (or ATPase) complex confers ATP dependency and substrate specificity to the 26S complex. In Oryza sativa subsp. japonica (Rice), this protein is 26S proteasome regulatory subunit 6A homolog (TBP1).